The chain runs to 473 residues: H(+)/Cl(-) exchange transporter ClcA (473 aa).

Residues 1–32 (MKTDTPSLEIPQAARLRRRQLIRQLLERDKTP) are Cytoplasmic-facing. The helical transmembrane segment at 33-69 (LAILFMAAVVGTLVGLAAVAFDKGVSWLQNQRMGALV) threads the bilayer. Over 70 to 76 (HTADNYP) the chain is Periplasmic. Residues 77–100 (LLLTVAFLCSAVLAMFGYFLVRKY) traverse the membrane as a helical segment. Positions 106–110 (GSGIP) match the Selectivity filter part_1 motif. S107 provides a ligand contact to chloride. The helical intramembrane region spans 109–116 (IPEIEGAL). Residues 117–123 (EDQRPVR) lie on the Cytoplasmic side of the membrane. 2 helical membrane passes run 124 to 141 (WWRV…TLGG) and 148 to 166 (EGPT…LDIF). Positions 146–150 (GREGP) match the Selectivity filter part_2 motif. Residues 167–176 (RLKGDEARHT) lie on the Cytoplasmic side of the membrane. Intramembrane regions (helical) lie at residues 177–189 (LLAT…LAAA) and 193–201 (PLAGILFII). Topologically, residues 202–214 (EEMRPQFRYTLIS) are cytoplasmic. Residues 215–232 (IKAVFIGVIMSTIMYRIF) traverse the membrane as a helical segment. The Periplasmic segment spans residues 233–252 (NHEVALIDVGKLSDAPLNTL). Residues 253 to 281 (WLYLILGIIFGIFGPIFNKWVLGMQDLLH) traverse the membrane as a helical segment. The Cytoplasmic segment spans residues 282–287 (RVHGGN). The helical transmembrane segment at 288 to 309 (ITKWVIMGGAIGGLCGLLGFVA) threads the bilayer. Residues 310–329 (PATSGGGFNLIPIATAGNFS) lie on the Periplasmic side of the membrane. The next 2 membrane-spanning stretches (helical) occupy residues 330-349 (MGML…LCFS) and 355-376 (GIFA…MVAV). A Selectivity filter part_3 motif is present at residues 355–359 (GIFAP). Positions 356 and 357 each coordinate chloride. The Periplasmic portion of the chain corresponds to 377–386 (ELFPQYHLEA). The helical intramembrane region spans 387-401 (GTFAIAGMGALLAAS). The segment at residues 402–404 (IRA) is an intramembrane region (note=Loop between two helices). An intramembrane region (helical) is located at residues 405-416 (PLTGIILVLEMT). The segment at residues 417–421 (DNYQL) is an intramembrane region (note=Loop between two helices). Residues 422–438 (ILPMIITGLGATLLAQF) traverse the membrane as a helical segment. At 439 to 473 (TGGKPLYSAILARTLAKQEAEQLARSKAASASENT) the chain is on the cytoplasmic side. Y445 is a chloride binding site.

This sequence belongs to the chloride channel (TC 2.A.49) family. ClcA subfamily. As to quaternary structure, homodimer.

It is found in the cell inner membrane. It catalyses the reaction 2 chloride(in) + H(+)(out) = 2 chloride(out) + H(+)(in). Proton-coupled chloride transporter. Functions as antiport system and exchanges two chloride ions for 1 proton. Probably acts as an electrical shunt for an outwardly-directed proton pump that is linked to amino acid decarboxylation, as part of the extreme acid resistance (XAR) response. In Escherichia fergusonii (strain ATCC 35469 / DSM 13698 / CCUG 18766 / IAM 14443 / JCM 21226 / LMG 7866 / NBRC 102419 / NCTC 12128 / CDC 0568-73), this protein is H(+)/Cl(-) exchange transporter ClcA.